The chain runs to 312 residues: MVRVYAPASIANIGVGFDTLGMAIAPINGSLLGDCISIEHANAFSLRSTGFFHSQLPIQLEENIVFQCWRKFCEILGQTYFLSIKLEKNIPVASGLGSSACSIVAVLVAMNYHCGCPLNTDQLLMLMGEMEGKISGSIHFDNVSPCFLGGMRLILQNCNIVNQVIPSFDDWLWIVAYPGIKISTAVSRSVLPNKYDREDCINHSQYLSGFVHACHTKQEYLAIRCMKDIIAEPYRSRLFPIELSCIRHNIMKRGAISCGISGSGPTVFVLCNNHDVIGDISDWLSRFYLQNNSGFIRICSLDNLGARIMVNN.

91–101 (PVASGLGSSAC) provides a ligand contact to ATP.

It belongs to the GHMP kinase family. Homoserine kinase subfamily.

The protein resides in the cytoplasm. The catalysed reaction is L-homoserine + ATP = O-phospho-L-homoserine + ADP + H(+). The protein operates within amino-acid biosynthesis; L-threonine biosynthesis; L-threonine from L-aspartate: step 4/5. Its function is as follows. Catalyzes the ATP-dependent phosphorylation of L-homoserine to L-homoserine phosphate. The chain is Homoserine kinase from Blochmanniella pennsylvanica (strain BPEN).